A 162-amino-acid chain; its full sequence is 2-C-methyl-D-erythritol 2,4-cyclodiphosphate synthase (162 aa).

Residues D12 and H14 each contribute to the a divalent metal cation site. 4-CDP-2-C-methyl-D-erythritol 2-phosphate is bound by residues 12–14 (DVH) and 38–39 (HS). H46 is a binding site for a divalent metal cation. Residues 60 to 62 (DIG), 136 to 139 (TTTE), F143, and R146 each bind 4-CDP-2-C-methyl-D-erythritol 2-phosphate.

The protein belongs to the IspF family. As to quaternary structure, homotrimer. The cofactor is a divalent metal cation.

The catalysed reaction is 4-CDP-2-C-methyl-D-erythritol 2-phosphate = 2-C-methyl-D-erythritol 2,4-cyclic diphosphate + CMP. It participates in isoprenoid biosynthesis; isopentenyl diphosphate biosynthesis via DXP pathway; isopentenyl diphosphate from 1-deoxy-D-xylulose 5-phosphate: step 4/6. Involved in the biosynthesis of isopentenyl diphosphate (IPP) and dimethylallyl diphosphate (DMAPP), two major building blocks of isoprenoid compounds. Catalyzes the conversion of 4-diphosphocytidyl-2-C-methyl-D-erythritol 2-phosphate (CDP-ME2P) to 2-C-methyl-D-erythritol 2,4-cyclodiphosphate (ME-CPP) with a corresponding release of cytidine 5-monophosphate (CMP). This Porphyromonas gingivalis (strain ATCC BAA-308 / W83) protein is 2-C-methyl-D-erythritol 2,4-cyclodiphosphate synthase.